The primary structure comprises 633 residues: Copine-7 (633 aa).

2 C2 domains span residues 2–133 and 212–339; these read SAGS…MRVS and NAGK…AQWD. The Ca(2+) site is built by D245, D251, D307, D309, and D315. The region spanning 382–581 is the VWFA domain; it reads HFTVAIDFTA…PALRDIVQFV (200 aa).

The protein belongs to the copine family. Ca(2+) is required as a cofactor. As to expression, expressed in the brain, testis, thymus and small intestine.

It is found in the cytoplasm. Its subcellular location is the nucleus. The protein resides in the cell membrane. Functionally, calcium-dependent phospholipid-binding protein that may play a role in calcium-mediated intracellular processes. The polypeptide is Copine-7 (Homo sapiens (Human)).